A 279-amino-acid chain; its full sequence is Coiled-coil domain-containing protein 117 (279 aa).

Positions 1–82 (MAALGRPFSG…REEEEDDDCP (82 aa)) are disordered. Position 48 is an omega-N-methylarginine (R48). Residue S53 is modified to Phosphoserine. Residues 63–72 (VSVHCKKKHK) show a composition bias toward basic residues. The stretch at 141 to 168 (QCEVARRKLQEIEDRIIDEDEEVEADRN) forms a coiled coil. The tract at residues 217-279 (LLSDKPKPSS…ATSTEEEMEL (63 aa)) is disordered. 2 stretches are compositionally biased toward polar residues: residues 224–235 (PSSNTKNYTGES) and 262–272 (SLYNSLETATS).

As to quaternary structure, interacts with CIAO2B; the interaction is direct. Interacts with MMS19; the interaction is indirect.

The protein resides in the cytoplasm. Its subcellular location is the cytoskeleton. The protein localises to the spindle. It is found in the nucleus. Functionally, facilitates DNA repair, cell cycle progression, and cell proliferation through its interaction with CIAO2B. The protein is Coiled-coil domain-containing protein 117 of Homo sapiens (Human).